Reading from the N-terminus, the 470-residue chain is Transcriptional activator PmfR (470 aa).

In terms of assembly, forms oligomers in solution, probably homotetramers.

The protein operates within alkaloid degradation; nicotine degradation [regulation]. Its function is as follows. Transcriptional regulator involved in the activation of the purU-mabO-folD-nepA-nepB and mao-ORF55-nbr operons implicated in the nicotine catabolic pathway. The sequence GTTT-14 bp-AAAC seems to be the core binding site of the regulator upstream of the -35 promoter region of the operon. In Paenarthrobacter nicotinovorans (Arthrobacter nicotinovorans), this protein is Transcriptional activator PmfR (pmfR).